We begin with the raw amino-acid sequence, 712 residues long: Polyribonucleotide nucleotidyltransferase (712 aa).

The Mg(2+) site is built by aspartate 487 and aspartate 493. In terms of domain architecture, KH spans proline 554–isoleucine 613. Residues glycine 623 to lysine 691 enclose the S1 motif domain.

This sequence belongs to the polyribonucleotide nucleotidyltransferase family. Mg(2+) is required as a cofactor.

The protein resides in the cytoplasm. The enzyme catalyses RNA(n+1) + phosphate = RNA(n) + a ribonucleoside 5'-diphosphate. In terms of biological role, involved in mRNA degradation. Catalyzes the phosphorolysis of single-stranded polyribonucleotides processively in the 3'- to 5'-direction. This Bacillus anthracis protein is Polyribonucleotide nucleotidyltransferase.